The sequence spans 257 residues: Flap endonuclease Xni (257 aa).

D112 contacts Mg(2+). Residues 169–256 form the 5'-3' exonuclease domain; it reads EQKKLVEFWA…LGFSLKQLRL (88 aa). K(+) is bound by residues F179, A180, P188, V190, and I193. Positions 192–197 are interaction with DNA; that stretch reads GIGTKS.

This sequence belongs to the Xni family. Mg(2+) is required as a cofactor. It depends on K(+) as a cofactor.

Functionally, has flap endonuclease activity. During DNA replication, flap endonucleases cleave the 5'-overhanging flap structure that is generated by displacement synthesis when DNA polymerase encounters the 5'-end of a downstream Okazaki fragment. This is Flap endonuclease Xni from Pseudoalteromonas translucida (strain TAC 125).